We begin with the raw amino-acid sequence, 274 residues long: Small ribosomal subunit protein uS2 (274 aa).

Residues 255–274 (AEAESEDKGEVLYSFDDEEE) form a disordered region.

The protein belongs to the universal ribosomal protein uS2 family.

This chain is Small ribosomal subunit protein uS2, found in Gloeobacter violaceus (strain ATCC 29082 / PCC 7421).